Reading from the N-terminus, the 235-residue chain is Large ribosomal subunit protein uL1 (235 aa).

The protein belongs to the universal ribosomal protein uL1 family. In terms of assembly, part of the 50S ribosomal subunit.

Functionally, binds directly to 23S rRNA. The L1 stalk is quite mobile in the ribosome, and is involved in E site tRNA release. Protein L1 is also a translational repressor protein, it controls the translation of the L11 operon by binding to its mRNA. This chain is Large ribosomal subunit protein uL1, found in Thermobifida fusca (strain YX).